Here is a 100-residue protein sequence, read N- to C-terminus: MHLSPQEKDKLLIFSAAQLAERRLNRGLKLNYPETVAFLSFQVLEGARDGKSVSQLMSEGTTWLSKKQVMDGISEMVDEVQVEAVFPDGTKLVTIHNPIN.

It belongs to the urease gamma subunit family. In terms of assembly, heterotrimer of UreA (gamma), UreB (beta) and UreC (alpha) subunits. Three heterotrimers associate to form the active enzyme.

It is found in the cytoplasm. The enzyme catalyses urea + 2 H2O + H(+) = hydrogencarbonate + 2 NH4(+). It participates in nitrogen metabolism; urea degradation; CO(2) and NH(3) from urea (urease route): step 1/1. This Prochlorococcus marinus subsp. pastoris (strain CCMP1986 / NIES-2087 / MED4) protein is Urease subunit gamma.